We begin with the raw amino-acid sequence, 154 residues long: Interleukin-2 (154 aa).

The N-terminal stretch at 1-20 (MYKIQLLSCIALTLILVTNS) is a signal peptide. C78 and C126 are disulfide-bonded. Residue N111 is glycosylated (N-linked (GlcNAc...) asparagine).

It belongs to the IL-2 family.

It localises to the secreted. Its function is as follows. Cytokine produced by activated CD4-positive helper T-cells and to a lesser extend activated CD8-positive T-cells and natural killer (NK) cells that plays pivotal roles in the immune response and tolerance. Binds to a receptor complex composed of either the high-affinity trimeric IL-2R (IL2RA/CD25, IL2RB/CD122 and IL2RG/CD132) or the low-affinity dimeric IL-2R (IL2RB and IL2RG). Interaction with the receptor leads to oligomerization and conformation changes in the IL-2R subunits resulting in downstream signaling starting with phosphorylation of JAK1 and JAK3. In turn, JAK1 and JAK3 phosphorylate the receptor to form a docking site leading to the phosphorylation of several substrates including STAT5. This process leads to activation of several pathways including STAT, phosphoinositide-3-kinase/PI3K and mitogen-activated protein kinase/MAPK pathways. Functions as a T-cell growth factor and can increase NK-cell cytolytic activity as well. Promotes strong proliferation of activated B-cells and subsequently immunoglobulin production. Plays a pivotal role in regulating the adaptive immune system by controlling the survival and proliferation of regulatory T-cells, which are required for the maintenance of immune tolerance. Moreover, participates in the differentiation and homeostasis of effector T-cell subsets, including Th1, Th2, Th17 as well as memory CD8-positive T-cells. The sequence is that of Interleukin-2 (IL2) from Felis catus (Cat).